The chain runs to 551 residues: HTH-type transcriptional regulator SgrR (551 aa).

The HTH marR-type domain occupies 1-116; it reads MPSARLQQQF…LVSHLGRSFR (116 aa). The H-T-H motif DNA-binding region spans 26–49; sequence LNELAALLSCSRRHMRTLLNTMQD. The segment at 163–492 is solute-binding; it reads ELEADIAHHW…IDWQADAARW (330 aa).

Activates the small RNA gene sgrS under glucose-phosphate stress conditions as well as yfdZ. Represses its own transcription under both stress and non-stress conditions. Might act as a sensor of the intracellular accumulation of phosphoglucose by binding these molecules in its C-terminal solute-binding domain. This chain is HTH-type transcriptional regulator SgrR, found in Shigella flexneri serotype 5b (strain 8401).